The following is a 1220-amino-acid chain: MSVDGTKTFFNPYIGARKRSLEARNGLSFSTGQNYDEKNNRRDRNSITYVTTIDEFKYIAPKCLDDKDVKQKGTHIGKLKRSPVLYKNGEEYVFLNFEDCEDVWPRRCSIWNNRSFLPADFDPRFSRFHVYDMIETVEFASAAIDRDKNRFLELLRPMGTIVTMMGITECGKRVAVHVYGIKPYFYMRKVDTDTICGSRCPRELAEKLANVVRSSVNEVANAKRFCTPVTRTVSADCFEVDVVQRKDIYYYGTGHDEFYRVKSQSGKFITLLCDNFYPSIIKYEGNIDAITRMVLDNNGFSTFGWYSFKVGNNGEKVQVRAPCHHCTSCDIEINCTVDNLIGYPEDDAWPDYKLLCFDIECKSGGVNECAFPCATNEEDVVIQISCLLYSINTKQLEHALLFALGACDLPQTFKETFQSSYNILPIVLEFDSEFELLLAFMTFIKQYAPEFVTGYNIVNFDWAFIVTKLTTVYNMRLDGYGVVNQKGMFKVWDAGTNRFQKKGKFKATGMITLDMYSIATEKLKLQSYKLDVVAEAALGERKKELSYKEIPSHFAAGPEKRGIIGEYCLQDSLLVGKLFFKYIPHLELSAIAKLAGILLSKAIFDGQQIRVYTCLLRLARSHGFILPEKNKKFAETVSLTCEEDQTEICEHDSPQEPIHNIKQSSLCHSNSGRTIGYQGAKVLDPISGFHVDPVMVFDFASLYPSIIQAHNLCFTTLVHDDTNLSNLRPQDDYLEINVQGKLLRFVKPHIRESLLAILLKDWLAMRKAIRAKIPESCDEIAVLLDKQQAAIKVVCNSVYGFCGVSNGLLPCIDVAATVTTIGRNMLLTVRDYIHKQWGTRDALLREFPNLSNFMRPEDYSVSVIYGDTDSVFIKFKGVDIHGLVTTGDDMAKRVSSDLFPKPIKLECEKTFNKLLLITKKKYMGTIHGGRMLMKGVDIVRKNNCRFINTYAKKLSDLLFLDDTVAKAAATVAEKPPSFWATSPLPEGLNSFGGVLAEAYTRMMINNITEVEDFAMSAELSRPPDAYTNKRIPHLTVYYKLAMRSEQLPVVKDRISYVIAAATPEVVRDSARVAEFRGELDLCHQNSNTSCPGDSVMTNKETYVRHSPRNKLLISDMAEDPKYLLANNIPLNTDYYLSHLLGTLCVTFKALFGNDVKITETVLRRFIPETFTEDCSYTERVSSEMFTTIRSGIGLQVNEEEETRRKLNIAFRILTATPHRY.

This sequence belongs to the DNA polymerase type-B family. As to quaternary structure, forms a complex with the ssDNA-binding protein, the DNA polymerase processivity factor, and the alkaline exonuclease. Interacts with the helicase-primase complex composed of the primase, the helicase and the primase-associated factor; this interaction may coordinate leading and lagging strand DNA synthesis at the replication fork.

It localises to the host nucleus. It catalyses the reaction DNA(n) + a 2'-deoxyribonucleoside 5'-triphosphate = DNA(n+1) + diphosphate. The enzyme catalyses Endonucleolytic cleavage to 5'-phosphomonoester.. Replicates viral genomic DNA. The replication complex is composed of six viral proteins: the DNA polymerase, processivity factor, primase, primase-associated factor, helicase, and ssDNA-binding protein. Additionally, the polymerase contains an intrinsic ribonuclease H (RNase H) activity that specifically degrades RNA/DNA heteroduplexes or duplex DNA substrates in the 5' to 3' direction. Therefore, it can catalyze the excision of the RNA primers that initiate the synthesis of Okazaki fragments at a replication fork during viral DNA replication. The chain is DNA polymerase catalytic subunit (MDV043) from Gallid herpesvirus 2 (strain Chicken/Md5/ATCC VR-987) (GaHV-2).